The primary structure comprises 269 residues: Shikimate dehydrogenase (NADP(+)) (269 aa).

Shikimate-binding positions include 17 to 19 (SKS) and Thr64. Lys68 serves as the catalytic Proton acceptor. Glu80 is a binding site for NADP(+). The shikimate site is built by Asn89 and Asp105. NADP(+) is bound by residues 130–134 (GAGGA), 154–159 (NRTRAK), and Met213. Residue Tyr215 coordinates shikimate. Residue Gly237 coordinates NADP(+).

This sequence belongs to the shikimate dehydrogenase family. In terms of assembly, homodimer.

The enzyme catalyses shikimate + NADP(+) = 3-dehydroshikimate + NADPH + H(+). Its pathway is metabolic intermediate biosynthesis; chorismate biosynthesis; chorismate from D-erythrose 4-phosphate and phosphoenolpyruvate: step 4/7. Functionally, involved in the biosynthesis of the chorismate, which leads to the biosynthesis of aromatic amino acids. Catalyzes the reversible NADPH linked reduction of 3-dehydroshikimate (DHSA) to yield shikimate (SA). This Neisseria meningitidis serogroup B (strain ATCC BAA-335 / MC58) protein is Shikimate dehydrogenase (NADP(+)).